The following is a 240-amino-acid chain: Phosphoribosylaminoimidazole-succinocarboxamide synthase (240 aa).

It belongs to the SAICAR synthetase family.

It catalyses the reaction 5-amino-1-(5-phospho-D-ribosyl)imidazole-4-carboxylate + L-aspartate + ATP = (2S)-2-[5-amino-1-(5-phospho-beta-D-ribosyl)imidazole-4-carboxamido]succinate + ADP + phosphate + 2 H(+). The protein operates within purine metabolism; IMP biosynthesis via de novo pathway; 5-amino-1-(5-phospho-D-ribosyl)imidazole-4-carboxamide from 5-amino-1-(5-phospho-D-ribosyl)imidazole-4-carboxylate: step 1/2. The chain is Phosphoribosylaminoimidazole-succinocarboxamide synthase from Coxiella burnetii (strain RSA 493 / Nine Mile phase I).